The chain runs to 121 residues: Neuromedin-B (121 aa).

The first 24 residues, 1–24 (MTRQAGSSWLLRGLLLFALFASGV), serve as a signal peptide directing secretion. A Methionine amide modification is found at methionine 56. The propeptide occupies 60–121 (SLEPPSLSLV…RRLLEPLLQK (62 aa)).

The protein belongs to the bombesin/neuromedin-B/ranatensin family. As to expression, in the hindbrain, expressed in the medulla surrounding the lateral half of the facial nucleus. Also expressed in the olfactory bulb and hippocampus. Detected in a subset of neurons distributed throughout the retrotrapezoid nucleus/parafacial respiratory group (RTN/pFRG). Within the RTN/pFRG, expressed in neuronal subpopulations distinct from those expressing Grp. Expressed in lung.

It localises to the secreted. Its subcellular location is the cell projection. The protein localises to the neuron projection. In terms of biological role, stimulates smooth muscle contraction. Induces sighing by acting directly on the pre-Botzinger complex, a cluster of several thousand neurons in the ventrolateral medulla responsible for inspiration during respiratory activity. Contributes to the induction of sneezing following exposure to chemical irritants or allergens which causes release of NMB by nasal sensory neurons and activation of NMBR-expressing neurons in the sneeze-evoking region of the brainstem. These in turn activate neurons of the caudal ventral respiratory group, giving rise to the sneeze reflex. Contributes to induction of acute itch, possibly through activation of the NMBR receptor on dorsal root ganglion neurons. Increases expression of NMBR and steroidogenic mediators STAR, CYP11A1 and HSD3B1 in Leydig cells, induces secretion of testosterone by Leydig cells and also promotes Leydig cell proliferation. Plays a role in the innate immune response to influenza A virus infection by enhancing interferon alpha expression and reducing expression of IL6. Plays a role in CSF1-induced proliferation of osteoclast precursors by contributing to the positive regulation of the expression of the CSF1 receptor CSF1R. This chain is Neuromedin-B (Nmb), found in Mus musculus (Mouse).